A 363-amino-acid polypeptide reads, in one-letter code: DNA primase small subunit PriS (363 aa).

Residues D105, D107, and D265 contribute to the active site.

It belongs to the eukaryotic-type primase small subunit family. As to quaternary structure, heterodimer of a small subunit (PriS) and a large subunit (PriL). The cofactor is Mg(2+). Requires Mn(2+) as cofactor.

Functionally, catalytic subunit of DNA primase, an RNA polymerase that catalyzes the synthesis of short RNA molecules used as primers for DNA polymerase during DNA replication. The small subunit contains the primase catalytic core and has DNA synthesis activity on its own. Binding to the large subunit stabilizes and modulates the activity, increasing the rate of DNA synthesis while decreasing the length of the DNA fragments, and conferring RNA synthesis capability. The DNA polymerase activity may enable DNA primase to also catalyze primer extension after primer synthesis. May also play a role in DNA repair. This Methanococcus maripaludis (strain C7 / ATCC BAA-1331) protein is DNA primase small subunit PriS.